A 547-amino-acid polypeptide reads, in one-letter code: Chaperonin GroEL (547 aa).

Residues 30–33 (TLGP), Lys51, 87–91 (DGTTT), Gly415, and Asp496 contribute to the ATP site. The segment at 528–547 (DKSDMPAMPPGGMGGMGGMY) is disordered. Over residues 538 to 547 (GGMGGMGGMY) the composition is skewed to gly residues.

The protein belongs to the chaperonin (HSP60) family. In terms of assembly, forms a cylinder of 14 subunits composed of two heptameric rings stacked back-to-back. Interacts with the co-chaperonin GroES.

The protein localises to the cytoplasm. It carries out the reaction ATP + H2O + a folded polypeptide = ADP + phosphate + an unfolded polypeptide.. Its function is as follows. Together with its co-chaperonin GroES, plays an essential role in assisting protein folding. The GroEL-GroES system forms a nano-cage that allows encapsulation of the non-native substrate proteins and provides a physical environment optimized to promote and accelerate protein folding. In Chlorobium luteolum (strain DSM 273 / BCRC 81028 / 2530) (Pelodictyon luteolum), this protein is Chaperonin GroEL.